The sequence spans 349 residues: Phosphoribosylformylglycinamidine cyclo-ligase (349 aa).

The protein belongs to the AIR synthase family.

It localises to the cytoplasm. It carries out the reaction 2-formamido-N(1)-(5-O-phospho-beta-D-ribosyl)acetamidine + ATP = 5-amino-1-(5-phospho-beta-D-ribosyl)imidazole + ADP + phosphate + H(+). It functions in the pathway purine metabolism; IMP biosynthesis via de novo pathway; 5-amino-1-(5-phospho-D-ribosyl)imidazole from N(2)-formyl-N(1)-(5-phospho-D-ribosyl)glycinamide: step 2/2. This Listeria monocytogenes serotype 4b (strain CLIP80459) protein is Phosphoribosylformylglycinamidine cyclo-ligase.